A 549-amino-acid polypeptide reads, in one-letter code: Cation/acetate symporter ActP (549 aa).

13 helical membrane passes run 33 to 53 (WQAIIMFLIFVVFTLGITYWA), 77 to 97 (LAIAGDYMSAASFLGISALVF), 103 to 123 (GLIYSLGFLVGWPIILFLIAE), 148 to 168 (ILSACGSLVVVALYLIAQMVG), 183 to 203 (IAVVLVGVLMMMYVLFGGMLA), 206 to 226 (WVQIIKAVLLLFGASFMAFMV), 262 to 282 (ISALSLGLGLMFGTAGLPHIL), 303 to 323 (GFMGYFYILTFIIGFGAIMLV), 355 to 375 (LFLGFISAVAFATILAVVAGL), 404 to 424 (VSKITVLILGVIAIILGMLFE), 428 to 448 (IAFMVGLAFAIAASCNFPIIL), 464 to 484 (GGWLGLITAVVLMILGPTIWV), and 493 to 513 (IFPYEYPALFSISVAFLGIWF).

Belongs to the sodium:solute symporter (SSF) (TC 2.A.21) family.

The protein localises to the cell inner membrane. Its function is as follows. Transports acetate. The sequence is that of Cation/acetate symporter ActP from Shigella boydii serotype 4 (strain Sb227).